The sequence spans 422 residues: Growth arrest-specific protein 7 (422 aa).

A disordered region spans residues 1–117; sequence MATALQKPGM…SPGRKQSKEN (117 aa). Residues 22 to 55 form the WW domain; that stretch reads VILPPGWHSYLSPQGRRYYVNTTTNETTWERPSS. The span at 41-52 shows a compositional bias: polar residues; that stretch reads VNTTTNETTWER. The segment covering 53–65 has biased composition (low complexity); it reads PSSSPGISASPGP. A phosphoserine mark is found at Ser-62 and Ser-108. Positions 95–117 are enriched in polar residues; that stretch reads RKSTGDSQNLGSSSPGRKQSKEN. In terms of domain architecture, F-BAR spans 141 to 402; it reads TEWSYCDYFW…LLRKVDPAKD (262 aa). A coiled-coil region spans residues 254–329; that stretch reads ENFKKDMKKC…RKSTQAGDDL (76 aa).

Its subcellular location is the cytoplasm. May play a role in promoting maturation and morphological differentiation of cerebellar neurons. The sequence is that of Growth arrest-specific protein 7 (Gas7) from Rattus norvegicus (Rat).